A 747-amino-acid chain; its full sequence is Probable type III restriction-modification enzyme HindVI Mod subunit (747 aa).

The interval 267-270 (DPPY) is binding of S-adenosyl methionine.

This sequence belongs to the N(4)/N(6)-methyltransferase family. As to quaternary structure, homodimer, also forms a functional restriction-competent complex with Res.

It catalyses the reaction a 2'-deoxyadenosine in DNA + S-adenosyl-L-methionine = an N(6)-methyl-2'-deoxyadenosine in DNA + S-adenosyl-L-homocysteine + H(+). A beta subtype methylase that binds the system-specific DNA recognition site 5'-CGAAT-3' and methylates A-4 (of only 1 strand). DNA restriction requires both the Res and Mod subunits. The protein is Probable type III restriction-modification enzyme HindVI Mod subunit of Haemophilus influenzae (strain ATCC 51907 / DSM 11121 / KW20 / Rd).